Reading from the N-terminus, the 117-residue chain is MVRMYETIVIVQPELGDDELKGLTAKVTDIIGSFKGVLHRLEDWGVRKLAYPVKKSVRGRYYYVRFDGDAPLIAELERRLRLDDKVLRYQSVKLEKEAAAPAPKAAPVESAPAVEAE.

Residues 96–117 (KEAAAPAPKAAPVESAPAVEAE) form a disordered region. Residues 99–117 (AAPAPKAAPVESAPAVEAE) are compositionally biased toward low complexity.

Belongs to the bacterial ribosomal protein bS6 family.

Its function is as follows. Binds together with bS18 to 16S ribosomal RNA. This chain is Small ribosomal subunit protein bS6, found in Geobacter sulfurreducens (strain ATCC 51573 / DSM 12127 / PCA).